The chain runs to 64 residues: Translation machinery-associated protein 7 homolog (64 aa).

The disordered stretch occupies residues 1–64; that stretch reads MSGREGGKKK…QGGIKKSGKK (64 aa). Positions 27–44 are enriched in basic and acidic residues; sequence VAFKQKQKEQQKALDAAK.

Belongs to the TMA7 family.

This chain is Translation machinery-associated protein 7 homolog, found in Anopheles funestus (African malaria mosquito).